The sequence spans 54 residues: Ovomucoid (54 aa).

A Kazal-like domain is found at 4–54 (VDCSDYPRPDCTLEYMPLCGSDNKTYGNKCNFCNAVVDSNGTLTLSHFGKC). 3 disulfide bridges follow: Cys6–Cys36, Cys14–Cys33, and Cys22–Cys54. An N-linked (GlcNAc...) asparagine glycan is attached at Asn43.

The protein localises to the secreted. The sequence is that of Ovomucoid from Dendrocygna eytoni (Plumed whistling-duck).